Reading from the N-terminus, the 278-residue chain is Ribosomal RNA small subunit methyltransferase A (278 aa).

S-adenosyl-L-methionine contacts are provided by Asn-27, Leu-29, Gly-54, Glu-75, Asp-101, and Asn-122.

It belongs to the class I-like SAM-binding methyltransferase superfamily. rRNA adenine N(6)-methyltransferase family. RsmA subfamily.

The protein localises to the cytoplasm. It catalyses the reaction adenosine(1518)/adenosine(1519) in 16S rRNA + 4 S-adenosyl-L-methionine = N(6)-dimethyladenosine(1518)/N(6)-dimethyladenosine(1519) in 16S rRNA + 4 S-adenosyl-L-homocysteine + 4 H(+). Its function is as follows. Specifically dimethylates two adjacent adenosines (A1518 and A1519) in the loop of a conserved hairpin near the 3'-end of 16S rRNA in the 30S particle. May play a critical role in biogenesis of 30S subunits. The sequence is that of Ribosomal RNA small subunit methyltransferase A from Brucella anthropi (strain ATCC 49188 / DSM 6882 / CCUG 24695 / JCM 21032 / LMG 3331 / NBRC 15819 / NCTC 12168 / Alc 37) (Ochrobactrum anthropi).